Here is a 210-residue protein sequence, read N- to C-terminus: Thiamine-phosphate synthase 2 (210 aa).

4-amino-2-methyl-5-(diphosphooxymethyl)pyrimidine-binding positions include 38 to 42 (QLREK) and aspartate 70. Mg(2+) contacts are provided by aspartate 71 and glutamate 90. Threonine 109 lines the 4-amino-2-methyl-5-(diphosphooxymethyl)pyrimidine pocket. Position 135 to 137 (135 to 137 (TTT)) interacts with 2-[(2R,5Z)-2-carboxy-4-methylthiazol-5(2H)-ylidene]ethyl phosphate. Lysine 138 is a binding site for 4-amino-2-methyl-5-(diphosphooxymethyl)pyrimidine. Residue glycine 165 participates in 2-[(2R,5Z)-2-carboxy-4-methylthiazol-5(2H)-ylidene]ethyl phosphate binding.

It belongs to the thiamine-phosphate synthase family. Mg(2+) is required as a cofactor.

The enzyme catalyses 2-[(2R,5Z)-2-carboxy-4-methylthiazol-5(2H)-ylidene]ethyl phosphate + 4-amino-2-methyl-5-(diphosphooxymethyl)pyrimidine + 2 H(+) = thiamine phosphate + CO2 + diphosphate. It carries out the reaction 2-(2-carboxy-4-methylthiazol-5-yl)ethyl phosphate + 4-amino-2-methyl-5-(diphosphooxymethyl)pyrimidine + 2 H(+) = thiamine phosphate + CO2 + diphosphate. It catalyses the reaction 4-methyl-5-(2-phosphooxyethyl)-thiazole + 4-amino-2-methyl-5-(diphosphooxymethyl)pyrimidine + H(+) = thiamine phosphate + diphosphate. It participates in cofactor biosynthesis; thiamine diphosphate biosynthesis; thiamine phosphate from 4-amino-2-methyl-5-diphosphomethylpyrimidine and 4-methyl-5-(2-phosphoethyl)-thiazole: step 1/1. Functionally, condenses 4-methyl-5-(beta-hydroxyethyl)thiazole monophosphate (THZ-P) and 2-methyl-4-amino-5-hydroxymethyl pyrimidine pyrophosphate (HMP-PP) to form thiamine monophosphate (TMP). This is Thiamine-phosphate synthase 2 from Streptococcus pneumoniae serotype 4 (strain ATCC BAA-334 / TIGR4).